The primary structure comprises 73 residues: MIIPWQQIDPTTLYNLIESFVLREGTDYGLQEKSLQQKVADVLRQVQSGEAVLVWSELHESINIMPRGQYRPY.

This sequence belongs to the UPF0270 family.

This Sodalis glossinidius (strain morsitans) protein is UPF0270 protein SG2298.